A 239-amino-acid chain; its full sequence is Fatty acid metabolism regulator protein (239 aa).

The 69-residue stretch at 6 to 74 (QSPAGFAEEY…HGKPTKVNNF (69 aa)) folds into the HTH gntR-type domain. The segment at residues 34–53 (ERELSELIGVTRTTLREVLQ) is a DNA-binding region (H-T-H motif).

As to quaternary structure, homodimer.

The protein resides in the cytoplasm. Functionally, multifunctional regulator of fatty acid metabolism. The polypeptide is Fatty acid metabolism regulator protein (Proteus mirabilis (strain HI4320)).